A 122-amino-acid chain; its full sequence is Heat-labile enterotoxin IIB, B chain (122 aa).

Residues 1–23 (MSFKKIIKAFVIMAALVSVQAHA) form the signal peptide. An intrachain disulfide couples Cys33 to Cys104.

As to quaternary structure, heterohexamer of one A chain and of five B chains.

Functionally, the biological activity of the toxin is produced by the A chain, which activates intracellular adenyl cyclase. The sequence is that of Heat-labile enterotoxin IIB, B chain from Escherichia coli.